The chain runs to 190 residues: Peptidyl-tRNA hydrolase (190 aa).

Y18 provides a ligand contact to tRNA. The Proton acceptor role is filled by H23. The tRNA site is built by F67, N69, and N115.

It belongs to the PTH family. As to quaternary structure, monomer.

It localises to the cytoplasm. It carries out the reaction an N-acyl-L-alpha-aminoacyl-tRNA + H2O = an N-acyl-L-amino acid + a tRNA + H(+). Its function is as follows. Hydrolyzes ribosome-free peptidyl-tRNAs (with 1 or more amino acids incorporated), which drop off the ribosome during protein synthesis, or as a result of ribosome stalling. Catalyzes the release of premature peptidyl moieties from peptidyl-tRNA molecules trapped in stalled 50S ribosomal subunits, and thus maintains levels of free tRNAs and 50S ribosomes. In Leptospira interrogans serogroup Icterohaemorrhagiae serovar Lai (strain 56601), this protein is Peptidyl-tRNA hydrolase.